The following is a 380-amino-acid chain: Cytochrome b (380 aa).

4 consecutive transmembrane segments (helical) span residues 33–53 (FGSL…FLAM), 77–98 (WLIR…YLHV), 113–133 (WNIG…GYVL), and 178–198 (FFAF…IHLL). Positions 83 and 97 each coordinate heme b. Residues H182 and H196 each coordinate heme b. A ubiquinone is bound at residue H201. The next 4 helical transmembrane spans lie at 226 to 246 (YKDL…ALFS), 288 to 308 (LGGV…PMLH), 320 to 340 (LSQI…WIGG), and 347 to 367 (FVLI…IALP).

The protein belongs to the cytochrome b family. In terms of assembly, the cytochrome bc1 complex contains 3 respiratory subunits (MT-CYB, CYC1 and UQCRFS1), 2 core proteins (UQCRC1 and UQCRC2) and probably 6 low-molecular weight proteins. Heme b is required as a cofactor.

Its subcellular location is the mitochondrion inner membrane. Component of the ubiquinol-cytochrome c reductase complex (complex III or cytochrome b-c1 complex) that is part of the mitochondrial respiratory chain. The b-c1 complex mediates electron transfer from ubiquinol to cytochrome c. Contributes to the generation of a proton gradient across the mitochondrial membrane that is then used for ATP synthesis. This is Cytochrome b (mt-cyb) from Acipenser persicus (Persian sturgeon).